The chain runs to 327 residues: Probable pectinesterase A (327 aa).

A signal peptide spans 1–19 (MHTPYLLGALAALAATAVG). Residue N84 is glycosylated (N-linked (GlcNAc...) asparagine). Substrate is bound at residue Q145. Residue D168 is the Proton donor of the active site. D189 acts as the Nucleophile in catalysis. R249 and W251 together coordinate substrate. An N-linked (GlcNAc...) asparagine glycan is attached at N288.

This sequence belongs to the pectinesterase family.

It is found in the secreted. The enzyme catalyses [(1-&gt;4)-alpha-D-galacturonosyl methyl ester](n) + n H2O = [(1-&gt;4)-alpha-D-galacturonosyl](n) + n methanol + n H(+). It participates in glycan metabolism; pectin degradation; 2-dehydro-3-deoxy-D-gluconate from pectin: step 1/5. In terms of biological role, involved in maceration and soft-rotting of plant tissue. The chain is Probable pectinesterase A (pmeA) from Aspergillus niger (strain ATCC MYA-4892 / CBS 513.88 / FGSC A1513).